A 105-amino-acid polypeptide reads, in one-letter code: Met repressor (105 aa).

The protein belongs to the MetJ family. As to quaternary structure, homodimer.

The protein resides in the cytoplasm. In terms of biological role, this regulatory protein, when combined with SAM (S-adenosylmethionine) represses the expression of the methionine regulon and of enzymes involved in SAM synthesis. In Haemophilus influenzae (strain 86-028NP), this protein is Met repressor.